A 368-amino-acid chain; its full sequence is DNA replication and repair protein RecF (368 aa).

Residue 30 to 37 (GDNGAGKT) coordinates ATP.

Belongs to the RecF family.

Its subcellular location is the cytoplasm. Functionally, the RecF protein is involved in DNA metabolism; it is required for DNA replication and normal SOS inducibility. RecF binds preferentially to single-stranded, linear DNA. It also seems to bind ATP. This Xanthomonas oryzae pv. oryzae (strain KACC10331 / KXO85) protein is DNA replication and repair protein RecF.